A 476-amino-acid polypeptide reads, in one-letter code: MNNIIAQQIADQGGVEAWLHAQQHKSLLRFLTCGSVDDGKSTLIGRLLHDTRQIYEDQLSSLHNDSKRHGTQGEKLDLALLVDGLQAEREQGITIDVAYRYFSTEKRKFIIADTPGHEQYTRNMATGASTCDLAILLIDARKGVLDQTRRHSFISTLLGIKHLVVAINKMDLVDYSQATFEQIKQDYLDFATQLPGNLDIRFVPLSALEGENVAAPSGHMGWYSGPTLLDVLETVEVQRVVEQQPMRFPVQYVNRPNLDFRGYAGTLASGSVQVGQRVKVLPSGVESSIARIVTFDGDLQQAAAGEAITLVLKDEIDISRGDLLVDASAELTPVRAATVDVVWMAEQPLAPGQSFDVKIAGKKTRARVKGIQHQVEINSLTQHSIAELPLNAIGLVDIVFDEPMVLDSYQQNPVTGGMIFIDRLSNVTVGAGMIRQPLAEETAAGSTDFSAFELELNALVRRHFPHWNARDLLGGK.

Residues 25-241 (KSLLRFLTCG…LETVEVQRVV (217 aa)) form the tr-type G domain. The segment at 34 to 41 (GSVDDGKS) is G1. Residue 34–41 (GSVDDGKS) participates in GTP binding. The G2 stretch occupies residues 92-96 (GITID). The interval 113 to 116 (DTPG) is G3. Residues 113–117 (DTPGH) and 168–171 (NKMD) contribute to the GTP site. The G4 stretch occupies residues 168-171 (NKMD). Residues 206-208 (SAL) are G5.

Belongs to the TRAFAC class translation factor GTPase superfamily. Classic translation factor GTPase family. CysN/NodQ subfamily. As to quaternary structure, heterodimer composed of CysD, the smaller subunit, and CysN.

It catalyses the reaction sulfate + ATP + H(+) = adenosine 5'-phosphosulfate + diphosphate. It participates in sulfur metabolism; hydrogen sulfide biosynthesis; sulfite from sulfate: step 1/3. In terms of biological role, with CysD forms the ATP sulfurylase (ATPS) that catalyzes the adenylation of sulfate producing adenosine 5'-phosphosulfate (APS) and diphosphate, the first enzymatic step in sulfur assimilation pathway. APS synthesis involves the formation of a high-energy phosphoric-sulfuric acid anhydride bond driven by GTP hydrolysis by CysN coupled to ATP hydrolysis by CysD. The polypeptide is Sulfate adenylyltransferase subunit 1 (Erwinia tasmaniensis (strain DSM 17950 / CFBP 7177 / CIP 109463 / NCPPB 4357 / Et1/99)).